The following is a 949-amino-acid chain: Pyruvate, phosphate dikinase, chloroplastic (949 aa).

The N-terminal 74 residues, 1 to 74 (MASAFKGILI…VMAPASDPTS (74 aa)), are a transit peptide targeting the chloroplast. Threonine 530 bears the Phosphothreonine; by PDRP1 mark. The Tele-phosphohistidine intermediate role is filled by histidine 532. Substrate is bound by residues arginine 638, arginine 695, glutamate 824, glycine 845, threonine 846, asparagine 847, and aspartate 848. Mg(2+) is bound at residue glutamate 824. Residue aspartate 848 coordinates Mg(2+). Cysteine 910 acts as the Proton donor in catalysis.

This sequence belongs to the PEP-utilizing enzyme family. Homodimer. The cofactor is Mg(2+). In terms of processing, phosphorylation of Thr-530 in the dark inactivates the enzyme. Dephosphorylation upon light stimulation reactivates the enzyme.

The protein localises to the plastid. The protein resides in the chloroplast. The catalysed reaction is pyruvate + phosphate + ATP = phosphoenolpyruvate + AMP + diphosphate + H(+). Activated by light-induced dephosphorylation. Inhibited by dark-induced phosphorylation. Both reactions are catalyzed by PDRP1. Functionally, formation of phosphoenolpyruvate, which is the primary acceptor of CO(2) in C4 and some Crassulacean acid metabolism plants. The protein is Pyruvate, phosphate dikinase, chloroplastic (PPD) of Mesembryanthemum crystallinum (Common ice plant).